The primary structure comprises 364 residues: DNA replication and repair protein RecF (364 aa).

Residue 30-37 (GDNAQGKT) coordinates ATP.

Belongs to the RecF family.

It is found in the cytoplasm. The RecF protein is involved in DNA metabolism; it is required for DNA replication and normal SOS inducibility. RecF binds preferentially to single-stranded, linear DNA. It also seems to bind ATP. In Clostridium kluyveri (strain ATCC 8527 / DSM 555 / NBRC 12016 / NCIMB 10680 / K1), this protein is DNA replication and repair protein RecF.